The chain runs to 155 residues: 17.4 kDa class III heat shock protein (155 aa).

In terms of domain architecture, sHSP spans G35 to S155.

This sequence belongs to the small heat shock protein (HSP20) family. May form oligomeric structures.

The protein resides in the cytoplasm. In Arabidopsis thaliana (Mouse-ear cress), this protein is 17.4 kDa class III heat shock protein (HSP17.4B).